Reading from the N-terminus, the 93-residue chain is MSETRTRAHVFVSGTVQGVFYRASTRDAARERGVRGWVRNLDDGRVEAVFEGPESAVDSLIEWCHTGSPDASVSDVSVSYTEPEGIDGFHIRR.

Residues 7–93 (RAHVFVSGTV…EGIDGFHIRR (87 aa)) form the Acylphosphatase-like domain. Residues Arg-22 and Asn-40 contribute to the active site.

The protein belongs to the acylphosphatase family.

The catalysed reaction is an acyl phosphate + H2O = a carboxylate + phosphate + H(+). The polypeptide is Acylphosphatase (acyP) (Haloquadratum walsbyi (strain DSM 16790 / HBSQ001)).